A 132-amino-acid chain; its full sequence is MDVTXLLLATLLVFLCCFAAYSHLPPEEKLRDDRSLRSNSSVNLLDLPSVSIVALNKKSKKISRKEAENKRSSKKEASKQKVARPRTPLSVPCVSTRGSCKPPAPACCHPCASCQCRFFRSACSCRVINVNC.

An N-terminal signal peptide occupies residues M1–S22. An N-linked (GlcNAc...) asparagine glycan is attached at N39. Positions I62–C93 are disordered. The span at R64 to K79 shows a compositional bias: basic and acidic residues. 5 cysteine pairs are disulfide-bonded: C93–C108, C100–C114, C107–C125, C111–C132, and C116–C123. One can recognise an Agouti domain in the interval C93 to C132.

It localises to the secreted. Functionally, involved in the regulation of melanogenesis. The binding of ASP to MC1R precludes alpha-MSH initiated signaling and thus blocks production of cAMP, leading to a down-regulation of eumelanogenesis (brown/black pigment) and thus increasing synthesis of pheomelanin (yellow/red pigment). The polypeptide is Agouti-signaling protein (ASIP) (Leontopithecus chrysomelas (Golden-headed lion tamarin)).